Reading from the N-terminus, the 284-residue chain is Shikimate dehydrogenase (NADP(+)) (284 aa).

Residues 20 to 22 (SIS) and Ser-67 contribute to the shikimate site. The Proton acceptor role is filled by Lys-71. Asp-83 contributes to the NADP(+) binding site. Asn-92 and Asp-107 together coordinate shikimate. Residues 129–133 (GAGGA) and Ile-227 each bind NADP(+). A shikimate-binding site is contributed by Tyr-229. Gly-250 contributes to the NADP(+) binding site.

This sequence belongs to the shikimate dehydrogenase family. Homodimer.

The enzyme catalyses shikimate + NADP(+) = 3-dehydroshikimate + NADPH + H(+). It functions in the pathway metabolic intermediate biosynthesis; chorismate biosynthesis; chorismate from D-erythrose 4-phosphate and phosphoenolpyruvate: step 4/7. Functionally, involved in the biosynthesis of the chorismate, which leads to the biosynthesis of aromatic amino acids. Catalyzes the reversible NADPH linked reduction of 3-dehydroshikimate (DHSA) to yield shikimate (SA). In Streptococcus pneumoniae (strain ATCC 700669 / Spain 23F-1), this protein is Shikimate dehydrogenase (NADP(+)).